The following is a 190-amino-acid chain: Glycerol-3-phosphate acyltransferase 2 (190 aa).

Transmembrane regions (helical) follow at residues 1–21, 53–73, 76–96, 110–130, and 152–172; these read MNIL…ALIV, VIVA…PLIL, TINP…SVFA, VFLF…VLTL, and LIFE…SIII.

This sequence belongs to the PlsY family. As to quaternary structure, probably interacts with PlsX.

It localises to the cell membrane. The enzyme catalyses an acyl phosphate + sn-glycerol 3-phosphate = a 1-acyl-sn-glycero-3-phosphate + phosphate. Its pathway is lipid metabolism; phospholipid metabolism. Functionally, catalyzes the transfer of an acyl group from acyl-phosphate (acyl-PO(4)) to glycerol-3-phosphate (G3P) to form lysophosphatidic acid (LPA). This enzyme utilizes acyl-phosphate as fatty acyl donor, but not acyl-CoA or acyl-ACP. In Bacillus anthracis, this protein is Glycerol-3-phosphate acyltransferase 2.